We begin with the raw amino-acid sequence, 200 residues long: MALAYDGAIQRLIDSFASLPGIGPKGAQRIAFYLLQAPDAESQRLVDAINEVKEKVRFCEVCGNVCESSPCTICSDPRRDHGTICVVEEPKDVMSIERTREYRGLYQVLGGAINPMANVGPSDLNIAQLLNRLHDGEVKEIIVALNPNIEGEATTTYLSRLLAPLDIKVTRLASGLPVGGDLEYADEITLSRALEGRREV.

A C4-type zinc finger spans residues 59–74 (CEVCGNVCESSPCTIC). In terms of domain architecture, Toprim spans 82 to 177 (GTICVVEEPK…KVTRLASGLP (96 aa)).

This sequence belongs to the RecR family.

Its function is as follows. May play a role in DNA repair. It seems to be involved in an RecBC-independent recombinational process of DNA repair. It may act with RecF and RecO. This chain is Recombination protein RecR, found in Bifidobacterium animalis subsp. lactis (strain AD011).